A 396-amino-acid polypeptide reads, in one-letter code: Chalcone synthase (396 aa).

The active site involves Cys-169.

It belongs to the thiolase-like superfamily. Chalcone/stilbene synthases family.

The enzyme catalyses (E)-4-coumaroyl-CoA + 3 malonyl-CoA + 3 H(+) = 2',4,4',6'-tetrahydroxychalcone + 3 CO2 + 4 CoA. It functions in the pathway secondary metabolite biosynthesis; flavonoid biosynthesis. Functionally, the primary product of this enzyme is 4,2',4',6'-tetrahydroxychalcone (also termed naringenin-chalcone or chalcone) which can under specific conditions spontaneously isomerize into naringenin. In Pinus sylvestris (Scotch pine), this protein is Chalcone synthase (CHS).